A 198-amino-acid chain; its full sequence is GTP cyclohydrolase-2 (198 aa).

52–56 (RMHSE) contacts GTP. The Zn(2+) site is built by Cys-57, Cys-68, and Cys-70. GTP-binding positions include Gln-73, 94-96 (EGR), and Thr-116. Asp-128 functions as the Proton acceptor in the catalytic mechanism. Arg-130 acts as the Nucleophile in catalysis. Residues Thr-151 and Lys-156 each contribute to the GTP site.

Belongs to the GTP cyclohydrolase II family. It depends on Zn(2+) as a cofactor.

It catalyses the reaction GTP + 4 H2O = 2,5-diamino-6-hydroxy-4-(5-phosphoribosylamino)-pyrimidine + formate + 2 phosphate + 3 H(+). The protein operates within cofactor biosynthesis; riboflavin biosynthesis; 5-amino-6-(D-ribitylamino)uracil from GTP: step 1/4. Its function is as follows. Catalyzes the conversion of GTP to 2,5-diamino-6-ribosylamino-4(3H)-pyrimidinone 5'-phosphate (DARP), formate and pyrophosphate. This Vibrio parahaemolyticus serotype O3:K6 (strain RIMD 2210633) protein is GTP cyclohydrolase-2.